A 215-amino-acid chain; its full sequence is Ras-related protein RAB1BV (215 aa).

Residues 22 to 29 (GDSGVGKS), 70 to 74 (DTAGQ), and 128 to 131 (NKAD) each bind GTP. The disordered stretch occupies residues 183-215 (DSDTRQEAQPSITIKPADQSGNQAAAKSACCGS). 2 S-geranylgeranyl cysteine lipidation sites follow: Cys-212 and Cys-213.

This sequence belongs to the small GTPase superfamily. Rab family.

The protein localises to the cell membrane. In Beta vulgaris (Sugar beet), this protein is Ras-related protein RAB1BV (RAB1BV).